Here is a 306-residue protein sequence, read N- to C-terminus: Homoserine O-acetyltransferase (306 aa).

The active-site Acyl-thioester intermediate is the C142. 2 residues coordinate substrate: K163 and S192. H235 functions as the Proton acceptor in the catalytic mechanism. Residue E237 is part of the active site. R249 lines the substrate pocket.

The protein belongs to the MetA family.

The protein resides in the cytoplasm. The enzyme catalyses L-homoserine + acetyl-CoA = O-acetyl-L-homoserine + CoA. It participates in amino-acid biosynthesis; L-methionine biosynthesis via de novo pathway; O-acetyl-L-homoserine from L-homoserine: step 1/1. Functionally, transfers an acetyl group from acetyl-CoA to L-homoserine, forming acetyl-L-homoserine. The chain is Homoserine O-acetyltransferase from Brucella melitensis biotype 1 (strain ATCC 23456 / CCUG 17765 / NCTC 10094 / 16M).